Consider the following 955-residue polypeptide: Anoctamin-4 (955 aa).

Topologically, residues methionine 1–alanine 352 are extracellular. A disordered region spans residues cysteine 72 to threonine 100. Residues asparagine 83, asparagine 105, asparagine 257, and asparagine 288 are each glycosylated (N-linked (GlcNAc...) asparagine). The helical transmembrane segment at tryptophan 353–leucine 373 threads the bilayer. Residues tyrosine 374 to asparagine 424 are Cytoplasmic-facing. A helical transmembrane segment spans residues glycine 425–tryptophan 445. Over lysine 446–serine 505 the chain is Extracellular. A helical transmembrane segment spans residues alanine 506–tyrosine 526. The Cytoplasmic portion of the chain corresponds to arginine 527–glutamine 547. Residues valine 548–leucine 568 traverse the membrane as a helical segment. The Extracellular segment spans residues tyrosine 569–lysine 595. Residues methionine 596 to glycine 616 form a helical membrane-spanning segment. The Cytoplasmic portion of the chain corresponds to arginine 617–glutamate 715. Residues methionine 716–leucine 736 form a helical membrane-spanning segment. Residues alanine 737–glycine 768 are Extracellular-facing. The helical transmembrane segment at isoleucine 769–isoleucine 789 threads the bilayer. At alanine 790–leucine 885 the chain is on the cytoplasmic side. Residues alanine 886 to isoleucine 906 traverse the membrane as a helical segment. Residues proline 907–proline 955 lie on the Extracellular side of the membrane.

Belongs to the anoctamin family.

Its subcellular location is the cell membrane. The catalysed reaction is a 1,2-diacyl-sn-glycero-3-phospho-L-serine(in) = a 1,2-diacyl-sn-glycero-3-phospho-L-serine(out). It catalyses the reaction a beta-D-galactosyl-(1&lt;-&gt;1')-N-acylsphing-4-enine(out) = a beta-D-galactosyl-(1&lt;-&gt;1')-N-acylsphing-4-enine(in). The enzyme catalyses a 1,2-diacyl-sn-glycero-3-phosphocholine(in) = a 1,2-diacyl-sn-glycero-3-phosphocholine(out). In terms of biological role, has calcium-dependent phospholipid scramblase activity; scrambles phosphatidylserine, phosphatidylcholine and galactosylceramide. Does not exhibit calcium-activated chloride channel (CaCC) activity. The polypeptide is Anoctamin-4 (ANO4) (Homo sapiens (Human)).